The chain runs to 574 residues: 3-hydroxy-3-methylglutaryl-coenzyme A reductase 3 (574 aa).

The interval Met1–Ser30 is disordered. A helical membrane pass occupies residues Pro41–Leu61. N-linked (GlcNAc...) asparagine glycosylation is present at Asn78. The helical transmembrane segment at Val83 to Phe103 threads the bilayer. The segment at Val104 to Glu161 is linker. The N-linked (GlcNAc...) asparagine glycan is linked to Asn113. A catalytic region spans residues Asp162 to Lys574. The active-site Charge relay system is Glu256. N-linked (GlcNAc...) asparagine glycosylation occurs at Asn320. Lys388 functions as the Charge relay system in the catalytic mechanism. Asn433 is a glycosylation site (N-linked (GlcNAc...) asparagine). Catalysis depends on Asp464, which acts as the Charge relay system. His562 acts as the Proton donor in catalysis. Asn566 carries N-linked (GlcNAc...) asparagine glycosylation.

Belongs to the HMG-CoA reductase family. Expressed in mature petals and anthers.

The protein resides in the endoplasmic reticulum membrane. The catalysed reaction is (R)-mevalonate + 2 NADP(+) + CoA = (3S)-3-hydroxy-3-methylglutaryl-CoA + 2 NADPH + 2 H(+). It participates in metabolic intermediate biosynthesis; (R)-mevalonate biosynthesis; (R)-mevalonate from acetyl-CoA: step 3/3. Catalyzes the synthesis of mevalonate. The specific precursor of all isoprenoid compounds present in plants. This Solanum tuberosum (Potato) protein is 3-hydroxy-3-methylglutaryl-coenzyme A reductase 3 (HMG3).